Here is a 237-residue protein sequence, read N- to C-terminus: Orotidine 5'-phosphate decarboxylase (237 aa).

Substrate-binding positions include Asp11, Lys34, 61-70, Thr124, Arg186, Gln195, Gly215, and Arg216; that span reads DLKLHDIPNT. Lys63 serves as the catalytic Proton donor.

This sequence belongs to the OMP decarboxylase family. Type 1 subfamily. As to quaternary structure, homodimer.

The catalysed reaction is orotidine 5'-phosphate + H(+) = UMP + CO2. Its pathway is pyrimidine metabolism; UMP biosynthesis via de novo pathway; UMP from orotate: step 2/2. Catalyzes the decarboxylation of orotidine 5'-monophosphate (OMP) to uridine 5'-monophosphate (UMP). This Lactococcus lactis subsp. cremoris (strain MG1363) protein is Orotidine 5'-phosphate decarboxylase.